Here is a 199-residue protein sequence, read N- to C-terminus: Dephospho-CoA kinase (199 aa).

In terms of domain architecture, DPCK spans Val3–Pro199. Residue Gly11 to Thr16 coordinates ATP.

Belongs to the CoaE family.

It is found in the cytoplasm. The enzyme catalyses 3'-dephospho-CoA + ATP = ADP + CoA + H(+). Its pathway is cofactor biosynthesis; coenzyme A biosynthesis; CoA from (R)-pantothenate: step 5/5. Catalyzes the phosphorylation of the 3'-hydroxyl group of dephosphocoenzyme A to form coenzyme A. In Rhodopseudomonas palustris (strain HaA2), this protein is Dephospho-CoA kinase.